We begin with the raw amino-acid sequence, 2349 residues long: Reducing polyketide synthase hmp8 (2349 aa).

One can recognise a Ketosynthase family 3 (KS3) domain in the interval 9–435; it reads HVPVAIIGLA…GTNGHVVLEA (427 aa). Catalysis depends on for beta-ketoacyl synthase activity residues Cys-182, His-317, and His-357. The malonyl-CoA:ACP transacylase (MAT) domain stretch occupies residues 551 to 856; that stretch reads FVFTGQGAQW…SHNGIKNVAY (306 aa). The segment at 930-1066 is N-terminal hotdog fold; the sequence is RSLIGAPVPM…GLVAIDYEES (137 aa). The PKS/mFAS DH domain occupies 930–1250; that stretch reads RSLIGAPVPM…TSELDMDSGK (321 aa). The dehydratase (DH) domain stretch occupies residues 932–1244; it reads LIGAPVPMMA…SVKDFRTSEL (313 aa). The active-site Proton acceptor; for dehydratase activity is the His-962. Residues 1094 to 1250 form a C-terminal hotdog fold region; it reads PEHYAHDKFY…TSELDMDSGK (157 aa). The Proton donor; for dehydratase activity role is filled by Asp-1160. An enoyl reductase (ER) domain region spans residues 1641–1953; it reads GLLDTLKFVP…QGKHRGKMVL (313 aa). Residues 1977-2157 are ketoreductase (KR) domain; that stretch reads ATYLFVGGLG…ISVNLGIMRD (181 aa). A Carrier domain is found at 2267–2344; that stretch reads EAAEIITDAL…SFAVKIAEKS (78 aa). The residue at position 2304 (Ser-2304) is an O-(pantetheine 4'-phosphoryl)serine.

It functions in the pathway secondary metabolite biosynthesis. Functionally, reducing polyketide synthase; part of the gene cluster that mediates the biosynthesis of hypothemycin, a resorcylic acid lactone (RAL) that irreversibly inhibits a subset of protein kinases with a conserved cysteine in the ATP binding site such as human ERK2. The first step is performed by both PKSs hmp3 and hmp8 and leads to the production of 7',8'-dehydrozearalenol (DHZ). The highly reducing PKS hpm8 synthesizes the reduced hexaketide (7S,11S,2E,8E)-7,11-dihydroxy-dodeca-2,8-dienoate, which is transferred downstream to the non-reducing PKS hpm3. Hpm3 then extends the reduced hexaketide to a nonaketide, after which regioselective cyclization and macrolactonization affords DHZ. The next step is the conversion of DHZ into aigialomycin C and is performed by the O-methyltransferase hmp5, the FAD-binding monooxygenase hmp7, and the cytochrome P450 monooxygenase hmp1. The wide substrate tolerance of the hmp5 and hmp7 implies that the reactions from DHZ to aigialomycin C can occur in any order. The steps from aigialomycin C to hypothemycin are less well established. The FAD-linked oxidoreductase hmp9 presumably catalyzes oxidation of the C-6' hydroxyl to a ketone. The timing of this oxidation is important, since the resulting enone functional group is a Michael acceptor that can react spontaneously with glutathione, an abundant metabolite in fungal cells. The glutathione S-transferase hmp2 catalyzes cis-trans isomerization of the 7',8' double bond with equilibrium favoring the trans isomer. The hpm6-encoded transporter might preferentially pump hypothemycin out of the cell relative to the trans isomer aigialomycin A. The cis-to-trans isomerization may be coupled with C-4' hydroxylation, since all known hypothemycin analogs containing the enone functional group also have hydroxyl groups at both C-4' and C-5'. In Hypomyces subiculosus (Nectria subiculosa), this protein is Reducing polyketide synthase hmp8.